The primary structure comprises 417 residues: Cobalamin binding intrinsic factor (417 aa).

The signal sequence occupies residues 1–18 (MAWFALYLLSLLWATAGT). Cystine bridges form between Cys-26/Cys-246, Cys-103/Cys-288, and Cys-143/Cys-182. Position 171 (Asp-171) interacts with cob(II)alamin. Ser-191 is modified (phosphoserine). 2 residues coordinate cob(II)alamin: Asp-222 and Gln-270. 3 N-linked (GlcNAc...) asparagine glycosylation sites follow: Asn-311, Asn-330, and Asn-334. Residues 365–370 (SWGLVV) and 386–395 (WQFLSGVTPL) each bind cob(II)alamin. N-linked (GlcNAc...) asparagine glycosylation occurs at Asn-413.

This sequence belongs to the eukaryotic cobalamin transport proteins family. In terms of assembly, interacts with CUBN (via CUB domains). In terms of tissue distribution, gastric mucosa.

The protein resides in the secreted. Promotes absorption of the essential vitamin cobalamin (Cbl) in the ileum. After interaction with CUBN, the CBLIF-cobalamin complex is internalized via receptor-mediated endocytosis. This is Cobalamin binding intrinsic factor from Homo sapiens (Human).